A 279-amino-acid polypeptide reads, in one-letter code: ESX-1 secretion-associated protein EspG1 (279 aa).

Belongs to the EspG family. In terms of assembly, interacts specifically with ESX-1-dependent PE/PPE proteins.

It is found in the cytoplasm. Its function is as follows. Specific chaperone for cognate PE/PPE proteins. Plays an important role in preventing aggregation of PE/PPE dimers. The polypeptide is ESX-1 secretion-associated protein EspG1 (Mycobacterium marinum (strain ATCC BAA-535 / M)).